Consider the following 850-residue polypeptide: G-type lectin S-receptor-like serine/threonine-protein kinase CES101 (850 aa).

Residues 1–22 (MWSNCIFLTLFTFYLFLGQSCC) form the signal peptide. Topologically, residues 23–423 (QTDTLLQGQY…IKGSKLAATW (401 aa)) are extracellular. The region spanning 24-144 (TDTLLQGQYL…DSDGSMKRTL (121 aa)) is the Bulb-type lectin domain. 4 N-linked (GlcNAc...) asparagine glycosylation sites follow: N55, N118, N194, and N374. The PAN domain maps to 334 to 416 (CSRFGYTFRE…PRTIYIRIKG (83 aa)). 2 disulfides stabilise this stretch: C367–C390 and C371–C377. A helical transmembrane segment spans residues 424–444 (LVVVASLFLIIPVTWLIIYLV). Residues 445 to 850 (LRKFKIKGTN…RVTITVMEAR (406 aa)) are Cytoplasmic-facing. Residues 527–816 (FSDANKLGEG…ALSLPKEPAF (290 aa)) enclose the Protein kinase domain. ATP contacts are provided by residues 533 to 541 (LGEGGFGPV) and K555. S561 is subject to Phosphoserine. A caM-binding region spans residues 616-633 (LRKIVLDWKLRFRIMEGI). The active-site Proton acceptor is the D652. S669 carries the phosphoserine modification. T686 carries the post-translational modification Phosphothreonine. 2 positions are modified to phosphoserine: S730 and S838. T845 bears the Phosphothreonine mark.

This sequence belongs to the protein kinase superfamily. Ser/Thr protein kinase family. As to expression, mostly expressed in leaves, and, to a lower extent, in roots and flowers.

The protein localises to the cell membrane. It catalyses the reaction L-seryl-[protein] + ATP = O-phospho-L-seryl-[protein] + ADP + H(+). It carries out the reaction L-threonyl-[protein] + ATP = O-phospho-L-threonyl-[protein] + ADP + H(+). In terms of biological role, promotes the expression of genes involved in photosynthesis at least in dedifferentiated calli. In Arabidopsis thaliana (Mouse-ear cress), this protein is G-type lectin S-receptor-like serine/threonine-protein kinase CES101 (CES101).